The chain runs to 471 residues: Probable ribonuclease FAU-1 (471 aa).

Belongs to the FAU-1 family.

Probable RNase involved in rRNA stability through maturation and/or degradation of precursor rRNAs. Preferentially cleaves UA sequences in the 5' precursor region of 5S rRNA. Binds to RNA in loop regions with AU-rich sequences. The protein is Probable ribonuclease FAU-1 of Thermococcus kodakarensis (strain ATCC BAA-918 / JCM 12380 / KOD1) (Pyrococcus kodakaraensis (strain KOD1)).